Here is a 295-residue protein sequence, read N- to C-terminus: UDP-N-acetylenolpyruvoylglucosamine reductase (295 aa).

The region spanning 26–189 is the FAD-binding PCMH-type domain; it reads VGGQADILFK…IEAEFKGVSS (164 aa). The active site involves arginine 169. Cysteine 218 (proton donor) is an active-site residue. The active site involves glutamate 288.

Belongs to the MurB family. FAD is required as a cofactor.

The protein resides in the cytoplasm. The enzyme catalyses UDP-N-acetyl-alpha-D-muramate + NADP(+) = UDP-N-acetyl-3-O-(1-carboxyvinyl)-alpha-D-glucosamine + NADPH + H(+). Its pathway is cell wall biogenesis; peptidoglycan biosynthesis. Its function is as follows. Cell wall formation. This chain is UDP-N-acetylenolpyruvoylglucosamine reductase, found in Wolbachia sp. subsp. Brugia malayi (strain TRS).